A 1244-amino-acid polypeptide reads, in one-letter code: Membrane-associated phosphatidylinositol transfer protein 1 (1244 aa).

Position 59 is a phosphothreonine (threonine 59). 2 disordered regions span residues lysine 258–serine 331 and alanine 339–serine 358. Phosphothreonine; by CDK1 is present on threonine 287. The span at alanine 299–serine 319 shows a compositional bias: low complexity. A phosphoserine mark is found at serine 300, serine 304, serine 319, serine 326, serine 329, serine 342, serine 345, serine 346, and serine 373. Phosphoserine; by CDK1 is present on serine 382. The segment at alanine 581–serine 682 is disordered. 3 positions are modified to phosphoserine: serine 593, serine 600, and serine 621. Polar residues predominate over residues glycine 643 to tryptophan 658. Residues leucine 686 to glutamate 880 form the DDHD domain. Serine 896 is modified (phosphoserine). Residues glutamine 1206 to glutamate 1244 are disordered. Arginine 1211 and arginine 1218 each carry omega-N-methylarginine. Serine 1237 bears the Phosphoserine mark.

Belongs to the PtdIns transfer protein family. PI transfer class IIA subfamily. In terms of assembly, interacts with PIK4CA. Interacts with PTK2B via its C-terminus. Interacts with RHOA. Has higher affinity for the inactive, GDP-bound form of RHOA. The CDK1-phosphorylated form interacts with PLK1. Interacts with VAPB. Phosphorylated on multiple sites by CDK1 at the onset of mitosis. Phosphorylation facilitates dissociation from the Golgi complex and is required for interaction with PLK1. Post-translationally, phosphorylated on threonine residues upon treatment with oleic acid. In terms of processing, phosphorylated on tyrosine residues by PTK2B. In terms of tissue distribution, ubiquitous.

It localises to the cytoplasm. Its subcellular location is the golgi apparatus. It is found in the golgi stack membrane. The protein localises to the endoplasmic reticulum membrane. The protein resides in the lipid droplet. It localises to the cleavage furrow. Its subcellular location is the midbody. The enzyme catalyses a 1,2-diacyl-sn-glycero-3-phospho-(1D-myo-inositol)(in) = a 1,2-diacyl-sn-glycero-3-phospho-(1D-myo-inositol)(out). Its function is as follows. Catalyzes the transfer of phosphatidylinositol (PI) between membranes. Binds PI, phosphatidylcholine (PC) and phosphatidic acid (PA) with the binding affinity order of PI &gt; PA &gt; PC. Regulates RHOA activity, and plays a role in cytoskeleton remodeling. Necessary for normal completion of cytokinesis. Plays a role in maintaining normal diacylglycerol levels in the Golgi apparatus. Necessary for maintaining the normal structure of the endoplasmic reticulum and the Golgi apparatus. Required for protein export from the endoplasmic reticulum and the Golgi. Binds calcium ions. This is Membrane-associated phosphatidylinositol transfer protein 1 (PITPNM1) from Homo sapiens (Human).